The following is a 146-amino-acid chain: Large ribosomal subunit protein uL15 (146 aa).

Residues 1-51 are disordered; it reads MKLHELKPAKGSRKVRNRVGRGTSSGNGKTSGRGQKGQKARSGGGVRLGFE. A compositionally biased stretch (basic residues) spans 10–19; the sequence is KGSRKVRNRV. Gly residues-rich tracts occupy residues 23–35 and 42–51; these read TSSGNGKTSGRGQ and SGGGVRLGFE.

Belongs to the universal ribosomal protein uL15 family. Part of the 50S ribosomal subunit.

Binds to the 23S rRNA. This is Large ribosomal subunit protein uL15 from Streptococcus equi subsp. equi (strain 4047).